The chain runs to 649 residues: ENTH domain-containing protein C19F8.03c (649 aa).

An ENTH domain is found at 2-136 (SPSKWLLTYE…VDYAQVGDAP (135 aa)). Disordered stretches follow at residues 280–382 (YLQN…NELE), 409–440 (LSAEGTSASPSLDKKSESTNIVQPIPSHPNDS), and 590–649 (FTHG…PFRS). Phosphoserine is present on residues Ser-285 and Ser-287. Positions 299 to 308 (PTLRKKKSIP) are enriched in basic residues. Polar residues-rich tracts occupy residues 313 to 326 (ESSSTIQKENTVQQ) and 340 to 349 (PETQRTTSRI). Residues 352–381 (QEEEIKEEEMEGEEEEEEEEVPNYESENEL) are compositionally biased toward acidic residues. Composition is skewed to polar residues over residues 409-418 (LSAEGTSASP), 614-624 (TPYTASKNPFS), and 635-649 (ARNSISTESKNPFRS). Thr-414 carries the phosphothreonine modification. A Phosphoserine modification is found at Ser-417.

Its subcellular location is the cytoplasm. This is ENTH domain-containing protein C19F8.03c from Schizosaccharomyces pombe (strain 972 / ATCC 24843) (Fission yeast).